The chain runs to 487 residues: 3-octaprenyl-4-hydroxybenzoate carboxy-lyase (487 aa).

Asn-172 provides a ligand contact to Mn(2+). Residues 175-177 (IYR), 189-191 (RWL), and 194-195 (RG) each bind prenylated FMN. Glu-238 contacts Mn(2+). Asp-287 functions as the Proton donor in the catalytic mechanism.

The protein belongs to the UbiD family. Homohexamer. The cofactor is prenylated FMN. Mn(2+) is required as a cofactor.

It localises to the cell membrane. The catalysed reaction is a 4-hydroxy-3-(all-trans-polyprenyl)benzoate + H(+) = a 2-(all-trans-polyprenyl)phenol + CO2. Its pathway is cofactor biosynthesis; ubiquinone biosynthesis. Functionally, catalyzes the decarboxylation of 3-octaprenyl-4-hydroxy benzoate to 2-octaprenylphenol, an intermediate step in ubiquinone biosynthesis. The chain is 3-octaprenyl-4-hydroxybenzoate carboxy-lyase from Nitrosococcus oceani (strain ATCC 19707 / BCRC 17464 / JCM 30415 / NCIMB 11848 / C-107).